The following is a 172-amino-acid chain: EPLLDSEGELVRNGGTYYLLPDRWALGGGIEAAATGTETCPLTVVRSPNEVSVGEPLRISSQLRSGFIPDYSLVRIGFANPPKCAPSPWWTVVEDQPQQPSVKLSELKSTKFDYLFKFEKVTSKFSSYKLKYCAKRDTCKDIGIYRDQKGYARLVVTDENPLVVIFKKVESS.

2 disulfide bridges follow: Cys40-Cys84 and Cys133-Cys139.

This sequence belongs to the protease inhibitor I3 (leguminous Kunitz-type inhibitor) family.

WTI-1B inhibits trypsin stoichiometrically. The protein is Trypsin inhibitor 1B of Psophocarpus tetragonolobus (Winged bean).